The chain runs to 354 residues: Protein RecA (354 aa).

Glycine 67–threonine 74 contacts ATP.

It belongs to the RecA family.

It is found in the cytoplasm. Can catalyze the hydrolysis of ATP in the presence of single-stranded DNA, the ATP-dependent uptake of single-stranded DNA by duplex DNA, and the ATP-dependent hybridization of homologous single-stranded DNAs. It interacts with LexA causing its activation and leading to its autocatalytic cleavage. In Yersinia enterocolitica serotype O:8 / biotype 1B (strain NCTC 13174 / 8081), this protein is Protein RecA.